Consider the following 660-residue polypeptide: tRNA 5-methylaminomethyl-2-thiouridine biosynthesis bifunctional protein MnmC (660 aa).

The tract at residues 1-233 (MTHSHAQLVW…KRHISHGWIA (233 aa)) is tRNA (mnm(5)s(2)U34)-methyltransferase. Residues 260–660 (VGGGLAGAAS…IRRKLDPDAL (401 aa)) are FAD-dependent cmnm(5)s(2)U34 oxidoreductase.

The protein in the N-terminal section; belongs to the methyltransferase superfamily. tRNA (mnm(5)s(2)U34)-methyltransferase family. It in the C-terminal section; belongs to the DAO family. Requires FAD as cofactor.

Its subcellular location is the cytoplasm. The enzyme catalyses 5-aminomethyl-2-thiouridine(34) in tRNA + S-adenosyl-L-methionine = 5-methylaminomethyl-2-thiouridine(34) in tRNA + S-adenosyl-L-homocysteine + H(+). Functionally, catalyzes the last two steps in the biosynthesis of 5-methylaminomethyl-2-thiouridine (mnm(5)s(2)U) at the wobble position (U34) in tRNA. Catalyzes the FAD-dependent demodification of cmnm(5)s(2)U34 to nm(5)s(2)U34, followed by the transfer of a methyl group from S-adenosyl-L-methionine to nm(5)s(2)U34, to form mnm(5)s(2)U34. This chain is tRNA 5-methylaminomethyl-2-thiouridine biosynthesis bifunctional protein MnmC, found in Chromobacterium violaceum (strain ATCC 12472 / DSM 30191 / JCM 1249 / CCUG 213 / NBRC 12614 / NCIMB 9131 / NCTC 9757 / MK).